The following is a 135-amino-acid chain: Small ribosomal subunit protein uS12 (135 aa).

The tract at residues 1–20 (MPTINQLVRKGRHSKVTKSK) is disordered. A compositionally biased stretch (basic residues) spans 9–18 (RKGRHSKVTK). Asp102 is modified (3-methylthioaspartic acid).

The protein belongs to the universal ribosomal protein uS12 family. In terms of assembly, part of the 30S ribosomal subunit. Contacts proteins S8 and S17. May interact with IF1 in the 30S initiation complex.

In terms of biological role, with S4 and S5 plays an important role in translational accuracy. Functionally, interacts with and stabilizes bases of the 16S rRNA that are involved in tRNA selection in the A site and with the mRNA backbone. Located at the interface of the 30S and 50S subunits, it traverses the body of the 30S subunit contacting proteins on the other side and probably holding the rRNA structure together. The combined cluster of proteins S8, S12 and S17 appears to hold together the shoulder and platform of the 30S subunit. This is Small ribosomal subunit protein uS12 from Lactobacillus helveticus (strain DPC 4571).